The primary structure comprises 166 residues: Protein-export protein SecB (166 aa).

The protein belongs to the SecB family. In terms of assembly, homotetramer, a dimer of dimers. One homotetramer interacts with 1 SecA dimer.

Its subcellular location is the cytoplasm. Functionally, one of the proteins required for the normal export of preproteins out of the cell cytoplasm. It is a molecular chaperone that binds to a subset of precursor proteins, maintaining them in a translocation-competent state. It also specifically binds to its receptor SecA. This is Protein-export protein SecB from Actinobacillus pleuropneumoniae serotype 5b (strain L20).